A 127-amino-acid chain; its full sequence is Putative membrane protein insertion efficiency factor (127 aa).

A disordered region spans residues 71–106 (DPPPPPRLHRAAAARMPRQRDADPRDTTRCSSTGAE). Basic and acidic residues predominate over residues 88 to 98 (RQRDADPRDTT).

This sequence belongs to the UPF0161 family.

It localises to the cell inner membrane. In terms of biological role, could be involved in insertion of integral membrane proteins into the membrane. This is Putative membrane protein insertion efficiency factor from Sorangium cellulosum (strain So ce56) (Polyangium cellulosum (strain So ce56)).